The chain runs to 273 residues: Orotidine 5'-phosphate decarboxylase (273 aa).

K96 functions as the Proton donor in the catalytic mechanism.

The protein belongs to the OMP decarboxylase family. Type 2 subfamily.

It catalyses the reaction orotidine 5'-phosphate + H(+) = UMP + CO2. The protein operates within pyrimidine metabolism; UMP biosynthesis via de novo pathway; UMP from orotate: step 2/2. This Nocardioides sp. (strain ATCC BAA-499 / JS614) protein is Orotidine 5'-phosphate decarboxylase.